The primary structure comprises 338 residues: Transcription factor MYB76 (338 aa).

HTH myb-type domains follow at residues 9 to 65 (GEGL…KPDI) and 66 to 116 (KRGE…KKRL). 2 consecutive DNA-binding regions (H-T-H motif) follow at residues 37-61 (WRDIPEKAGLKRCGKSCRLRWTNYL) and 89-112 (WSVIARHLPKRTDNEVKNYWNTHL). 2 disordered regions span residues 123–171 (PVTH…SSNL) and 176–195 (SKISSGETQIESGHVSCKKR). Positions 140–154 (MKFDFQKKSNQDEHS) are enriched in basic and acidic residues. Low complexity predominate over residues 155 to 171 (SQSSSTTPASLPLSSNL).

In terms of assembly, can form complexes with MYC2, MYC3 or MYC4. Expressed in both vegetative and generative organs. Mostly present in inflorescences, flowers and seedlings, in the transition zone between roots and the foliar part, and stems, and, to a lower extent, in leaves (in midvein and trichomes).

Its subcellular location is the nucleus. Its function is as follows. Plays a role in determining the spatial distribution of aliphatic glucosinolates (AGLSs) within the leaf, mostly short chained. Together with MYB28/HAG1 and MYB29/HAG3, promotes aliphatic glucosinolate biosynthesis and represses indolic glucosinolate biosynthesis, but could not activate AGSL biosynthesis on its own. The protein is Transcription factor MYB76 (MYB76) of Arabidopsis thaliana (Mouse-ear cress).